The chain runs to 241 residues: Interleukin-6 (241 aa).

The interval 1–25 is disordered; the sequence is MNFTEGCEATGRRPGSAGSRRRRAP. An N-terminal signal peptide occupies residues 1-46; it reads MNFTEGCEATGRRPGSAGSRRRRAPRPGPVALLPLLLPLLLPPAAA. Cysteine 122 and cysteine 132 are oxidised to a cystine.

Belongs to the IL-6 superfamily. As to quaternary structure, component of a hexamer of two molecules each of IL6, IL6R and IL6ST; first binds to IL6R to associate with the signaling subunit IL6ST.

It is found in the secreted. Functionally, cytokine with a wide variety of biological functions in immunity, tissue regeneration, and metabolism. Binds to IL6R, then the complex associates to the signaling subunit IL6ST/gp130 to trigger the intracellular IL6-signaling pathway. The interaction with the membrane-bound IL6R and IL6ST stimulates 'classic signaling', whereas the binding of IL6 and soluble IL6R to IL6ST stimulates 'trans-signaling'. Alternatively, 'cluster signaling' occurs when membrane-bound IL6:IL6R complexes on transmitter cells activate IL6ST receptors on neighboring receiver cells. The sequence is that of Interleukin-6 (IL6) from Gallus gallus (Chicken).